A 629-amino-acid chain; its full sequence is Chaperone protein HtpG (629 aa).

The tract at residues 1-343 is a; substrate-binding; the sequence is MQKQTLSFQA…SSDLPLNVSR (343 aa). The tract at residues 344-558 is b; the sequence is ELLQESRAVK…DGDMSTQLAR (215 aa). The interval 559-629 is c; that stretch reads MLKQAGQTVP…YVRRVNALLV (71 aa).

This sequence belongs to the heat shock protein 90 family. Homodimer.

Its subcellular location is the cytoplasm. Molecular chaperone. Has ATPase activity. This chain is Chaperone protein HtpG, found in Polaromonas naphthalenivorans (strain CJ2).